Here is a 262-residue protein sequence, read N- to C-terminus: Phosphate import ATP-binding protein PstB (262 aa).

Residues 16–257 form the ABC transporter domain; it reads IDVRNLNFYY…PHRKETEDYI (242 aa). Position 48 to 55 (48 to 55) interacts with ATP; the sequence is GPSGCGKS.

Belongs to the ABC transporter superfamily. Phosphate importer (TC 3.A.1.7) family. The complex is composed of two ATP-binding proteins (PstB), two transmembrane proteins (PstC and PstA) and a solute-binding protein (PstS).

It is found in the cell inner membrane. The enzyme catalyses phosphate(out) + ATP + H2O = ADP + 2 phosphate(in) + H(+). In terms of biological role, part of the ABC transporter complex PstSACB involved in phosphate import. Responsible for energy coupling to the transport system. This is Phosphate import ATP-binding protein PstB from Cupriavidus metallidurans (strain ATCC 43123 / DSM 2839 / NBRC 102507 / CH34) (Ralstonia metallidurans).